Here is a 118-residue protein sequence, read N- to C-terminus: LYR motif containing protein 1 (118 aa).

A disordered region spans residues 91 to 118 (TQKGRKLRAQQRLRKQAKPVYLQSQDET). Positions 93–107 (KGRKLRAQQRLRKQA) are enriched in basic residues.

This sequence belongs to the complex I LYR family.

The sequence is that of LYR motif containing protein 1 (lyrm1) from Danio rerio (Zebrafish).